A 196-amino-acid polypeptide reads, in one-letter code: Ribonuclease HII (196 aa).

Residues 13–196 (LLVAGVDEAG…SFSPLKKKLF (184 aa)) form the RNase H type-2 domain. A divalent metal cation is bound by residues aspartate 19, glutamate 20, and aspartate 111.

Belongs to the RNase HII family. Mn(2+) is required as a cofactor. Mg(2+) serves as cofactor.

The protein localises to the cytoplasm. The catalysed reaction is Endonucleolytic cleavage to 5'-phosphomonoester.. Its function is as follows. Endonuclease that specifically degrades the RNA of RNA-DNA hybrids. This Aquifex aeolicus (strain VF5) protein is Ribonuclease HII (rnhB).